Here is a 417-residue protein sequence, read N- to C-terminus: Putative F-box protein At3g58950 (417 aa).

One can recognise an F-box domain in the interval Met1–Glu53.

This is Putative F-box protein At3g58950 from Arabidopsis thaliana (Mouse-ear cress).